The sequence spans 209 residues: Cyclin-dependent kinase inhibitor 2 (209 aa).

Residues 1 to 32 (MAAVRRRERDVVEENGVTTTTVKRRKMEEEVD) form a required for nuclear localization region.

It belongs to the CDI family. ICK/KRP subfamily. As to quaternary structure, specifically interacts with CDKA-1, but not with CDKB1-1. Phosphorylated.

It localises to the nucleus. It is found in the nucleoplasm. Binds and inhibits CYCD2-1/CDKA-1 complex kinase activity. Regulates cell division which is crucial for plant growth, development and morphogenesis. May regulate early lateral root initiation by blocking the G1/S phase transition. Controls the mitosis-to-endocycle transition and the onset of the endoreduplication cycle during leaf development through inhibition of mitotic CDKA-1 kinase complexes. Specifically targets CDKA-1. The sequence is that of Cyclin-dependent kinase inhibitor 2 (KRP2) from Arabidopsis thaliana (Mouse-ear cress).